The following is a 363-amino-acid chain: LIM and cysteine-rich domains protein 1 (363 aa).

Phosphoserine is present on S16. One can recognise a PET domain in the interval 99-206 (MIMTNPIATG…GEVALPGQGG (108 aa)). Residues 200-234 (ALPGQGGLPKEEGKQQEKPEGAETAPPTTNGSIGD) are disordered. Over residues 208–220 (PKEEGKQQEKPEG) the composition is skewed to basic and acidic residues. 2 LIM zinc-binding domains span residues 239–304 (YVCE…SLRP) and 305–363 (RCSG…SKRS).

Interacts with beta-dystroglycan. Interacts with GATA1, GATA4 and GATA6.

The protein localises to the cytoplasm. Its subcellular location is the nucleus. Transcriptional cofactor that restricts GATA6 function by inhibiting DNA-binding, resulting in repression of GATA6 transcriptional activation of downstream target genes. Represses GATA6-mediated trans activation of lung- and cardiac tissue-specific promoters. Inhibits DNA-binding by GATA4 and GATA1 to the cTNC promoter. Plays a critical role in the development of cardiac hypertrophy via activation of calcineurin/nuclear factor of activated T-cells signaling pathway. This chain is LIM and cysteine-rich domains protein 1 (LMCD1), found in Bos taurus (Bovine).